We begin with the raw amino-acid sequence, 454 residues long: Glutamyl-tRNA reductase (454 aa).

Substrate is bound by residues 49–52 (TCNR), S109, 114–116 (ETQ), and Q120. C50 (nucleophile) is an active-site residue. 189-194 (GAGKMS) contributes to the NADP(+) binding site. A compositionally biased stretch (basic and acidic residues) spans 432-442 (DHAEQSWKEGQ). The tract at residues 432–454 (DHAEQSWKEGQRPSLNQGMALRT) is disordered.

The protein belongs to the glutamyl-tRNA reductase family. As to quaternary structure, homodimer.

The enzyme catalyses (S)-4-amino-5-oxopentanoate + tRNA(Glu) + NADP(+) = L-glutamyl-tRNA(Glu) + NADPH + H(+). The protein operates within porphyrin-containing compound metabolism; protoporphyrin-IX biosynthesis; 5-aminolevulinate from L-glutamyl-tRNA(Glu): step 1/2. Functionally, catalyzes the NADPH-dependent reduction of glutamyl-tRNA(Glu) to glutamate 1-semialdehyde (GSA). In Shouchella clausii (strain KSM-K16) (Alkalihalobacillus clausii), this protein is Glutamyl-tRNA reductase.